Here is a 371-residue protein sequence, read N- to C-terminus: Queuine tRNA-ribosyltransferase (371 aa).

Asp90 functions as the Proton acceptor in the catalytic mechanism. Substrate-binding positions include 90–94, Asp144, Gln188, and Gly215; that span reads DSGGF. Residues 246–252 are RNA binding; the sequence is GVGTPED. Asp265 functions as the Nucleophile in the catalytic mechanism. The RNA binding; important for wobble base 34 recognition stretch occupies residues 270-274; it reads TRNAR. Zn(2+)-binding residues include Cys303, Cys305, Cys308, and His334.

This sequence belongs to the queuine tRNA-ribosyltransferase family. In terms of assembly, homodimer. Within each dimer, one monomer is responsible for RNA recognition and catalysis, while the other monomer binds to the replacement base PreQ1. Requires Zn(2+) as cofactor.

The enzyme catalyses 7-aminomethyl-7-carbaguanine + guanosine(34) in tRNA = 7-aminomethyl-7-carbaguanosine(34) in tRNA + guanine. The protein operates within tRNA modification; tRNA-queuosine biosynthesis. Its function is as follows. Catalyzes the base-exchange of a guanine (G) residue with the queuine precursor 7-aminomethyl-7-deazaguanine (PreQ1) at position 34 (anticodon wobble position) in tRNAs with GU(N) anticodons (tRNA-Asp, -Asn, -His and -Tyr). Catalysis occurs through a double-displacement mechanism. The nucleophile active site attacks the C1' of nucleotide 34 to detach the guanine base from the RNA, forming a covalent enzyme-RNA intermediate. The proton acceptor active site deprotonates the incoming PreQ1, allowing a nucleophilic attack on the C1' of the ribose to form the product. After dissociation, two additional enzymatic reactions on the tRNA convert PreQ1 to queuine (Q), resulting in the hypermodified nucleoside queuosine (7-(((4,5-cis-dihydroxy-2-cyclopenten-1-yl)amino)methyl)-7-deazaguanosine). The sequence is that of Queuine tRNA-ribosyltransferase from Neisseria gonorrhoeae (strain NCCP11945).